We begin with the raw amino-acid sequence, 1543 residues long: ABC multidrug transporter AFR1 (1543 aa).

The segment at 1 to 85 (MSAAGVPAEL…DGKQKRLPAD (85 aa)) is disordered. Residues 18-41 (TATTQNPSGLANSQVTSGPVSSAT) show a composition bias toward polar residues. Over residues 62 to 83 (AVEAEKAEAIDAAGDGKQKRLP) the composition is skewed to basic and acidic residues. N-linked (GlcNAc...) asparagine glycosylation is present at asparagine 117. The interval 119–157 (SQRSQHELHRPTTRHSVRSSFSRKDRVVSRLTQDDAEKA) is disordered. Basic and acidic residues predominate over residues 140–157 (SRKDRVVSRLTQDDAEKA). Residues asparagine 208 and asparagine 398 are each glycosylated (N-linked (GlcNAc...) asparagine). Residues 222–474 (IKVLGIFGFN…MIGLGYRDLP (253 aa)) enclose the ABC transporter 1 domain. A run of 5 helical transmembrane segments spans residues 585–605 (FGIS…GSVY), 619–639 (GGLL…ELPS), 670–690 (VPYN…MGGL), 695–715 (GAFF…SAFF), and 727–747 (VAAR…GYMI). A glycan (N-linked (GlcNAc...) asparagine) is linked at asparagine 823. The helical transmembrane segment at 845 to 865 (FGILLGFFTFFMFLQMLFIEV) threads the bilayer. The ABC transporter 2 domain maps to 918-1160 (FTWEGLSYTV…VLIDYLERNG (243 aa)). Position 954–961 (954–961 (GASGAGKT)) interacts with ATP. Asparagine 1223 carries an N-linked (GlcNAc...) asparagine glycan. Transmembrane regions (helical) follow at residues 1254–1274 (WTRL…FLQL), 1285–1305 (VFAI…IEPQ), 1336–1356 (MPYS…GVGF), 1366–1386 (FFLM…AVAA), 1391–1411 (ILIA…FCGV), and 1517–1537 (FGIF…AARF).

It belongs to the ABC transporter superfamily. ABCG family. PDR (TC 3.A.1.205) subfamily.

It localises to the cell membrane. It carries out the reaction itraconazole(in) + ATP + H2O = itraconazole(out) + ADP + phosphate + H(+). The enzyme catalyses voriconazole(in) + ATP + H2O = voriconazole(out) + ADP + phosphate + H(+). It catalyses the reaction fluconazole(in) + ATP + H2O = fluconazole(out) + ADP + phosphate + H(+). In terms of biological role, major pleiotropic ABC efflux transporter that confers resistance to structurally and functionally unrelated compounds including azoles such as fluconazole (FLC), itraconazole (ITC), posaconazole (POS), and voriconazole (VRC). Is also able to efflux the eukaryote protein synthesis inhibitor cycloheximide (CHX). This Cryptococcus neoformans var. grubii serotype A (strain H99 / ATCC 208821 / CBS 10515 / FGSC 9487) (Filobasidiella neoformans var. grubii) protein is ABC multidrug transporter AFR1.